The sequence spans 507 residues: Probable aldehyde dehydrogenase (507 aa).

219 to 225 (GFGVEAG) serves as a coordination point for NAD(+). Catalysis depends on residues Glu263 and Cys302.

The protein belongs to the aldehyde dehydrogenase family.

It catalyses the reaction an aldehyde + NAD(+) + H2O = a carboxylate + NADH + 2 H(+). This chain is Probable aldehyde dehydrogenase, found in Streptomyces coelicolor (strain ATCC BAA-471 / A3(2) / M145).